A 487-amino-acid chain; its full sequence is Glutamyl-tRNA(Gln) amidotransferase subunit A (487 aa).

Residues lysine 80 and serine 155 each act as charge relay system in the active site. The active-site Acyl-ester intermediate is the serine 179.

This sequence belongs to the amidase family. GatA subfamily. Heterotrimer of A, B and C subunits.

The enzyme catalyses L-glutamyl-tRNA(Gln) + L-glutamine + ATP + H2O = L-glutaminyl-tRNA(Gln) + L-glutamate + ADP + phosphate + H(+). In terms of biological role, allows the formation of correctly charged Gln-tRNA(Gln) through the transamidation of misacylated Glu-tRNA(Gln) in organisms which lack glutaminyl-tRNA synthetase. The reaction takes place in the presence of glutamine and ATP through an activated gamma-phospho-Glu-tRNA(Gln). The sequence is that of Glutamyl-tRNA(Gln) amidotransferase subunit A from Chloroflexus aurantiacus (strain ATCC 29366 / DSM 635 / J-10-fl).